The primary structure comprises 133 residues: Stage III sporulation protein AD (133 aa).

3 helical membrane passes run 2–22, 29–49, and 108–128; these read QIDI…SLIV, FAFL…VDQI, and ILIL…ILGL.

Its subcellular location is the cell membrane. The chain is Stage III sporulation protein AD (spoIIIAD) from Bacillus subtilis (strain 168).